Consider the following 161-residue polypeptide: Endoribonuclease YbeY (161 aa).

3 residues coordinate Zn(2+): His121, His125, and His131.

This sequence belongs to the endoribonuclease YbeY family. It depends on Zn(2+) as a cofactor.

It localises to the cytoplasm. Single strand-specific metallo-endoribonuclease involved in late-stage 70S ribosome quality control and in maturation of the 3' terminus of the 16S rRNA. The polypeptide is Endoribonuclease YbeY (Bordetella avium (strain 197N)).